Consider the following 765-residue polypeptide: Cyanobacterial phytochrome A (765 aa).

The segment at isoleucine 20–arginine 510 is chromophore binding domain. Positions asparagine 152 to glutamate 320 constitute a GAF domain. Cysteine 259 is a binding site for a tetrapyrrole. One can recognise a Histidine kinase domain in the interval valine 535–glycine 748. Histidine 538 carries the post-translational modification Phosphohistidine; by autocatalysis.

The protein in the N-terminal section; belongs to the phytochrome family. Contains one covalently linked tetrapyrrole chromophore.

The catalysed reaction is ATP + protein L-histidine = ADP + protein N-phospho-L-histidine.. Photoreceptor which exists in two forms that are reversibly interconvertible by light: the R form that absorbs maximally in the red region of the spectrum and the FR form that absorbs maximally in the far-red region. The protein is Cyanobacterial phytochrome A (aphA) of Nostoc sp. (strain PCC 7120 / SAG 25.82 / UTEX 2576).